A 624-amino-acid chain; its full sequence is Aliphatic sulfonate oxidoreductase, WOR-like subunit (624 aa).

8 residues coordinate tungstopterin: Lys77, Ser93, Val94, Ser96, His195, Ala196, Gly198, and Tyr199. Asp299, Cys302, and Cys306 together coordinate [4Fe-4S] cluster. Residues Asp353, Leu357, Asp358, Gly359, Thr470, Asp490, Ile494, Cys495, and Asn496 each coordinate tungstopterin. Residue Cys495 participates in [4Fe-4S] cluster binding. Residues 552–575 (KDDDNPPRFYEPLPSGPVKGKAPN) form a disordered region.

The protein belongs to the AOR/FOR family. Heterodimer composed of a small WOR5-S subunit, with four [4Fe-4S] clusters, and a large WOR5-L subunit, containing the active site tungsto-bispyranopterin cofactor as well as another [4Fe-4S] cluster. [4Fe-4S] cluster serves as cofactor. The cofactor is tungstopterin.

Its subcellular location is the cytoplasm. The enzyme catalyses an aliphatic sulfonate + 4 oxidized [4Fe-4S]-[ferredoxin] + 2 H2O = 4 reduced [4Fe-4S]-[ferredoxin] + a carboxylate + sulfite + 6 H(+). It carries out the reaction an aliphatic sulfonate + 2 oxidized [4Fe-4S]-[ferredoxin] + H2O = 2 reduced [4Fe-4S]-[ferredoxin] + an aldehyde + sulfite + 3 H(+). It catalyses the reaction 2 oxidized [4Fe-4S]-[ferredoxin] + an aldehyde + H2O = 2 reduced [4Fe-4S]-[ferredoxin] + a carboxylate + 3 H(+). The catalysed reaction is 4 oxidized [4Fe-4S]-[ferredoxin] + taurine + 2 H2O = 4 reduced [4Fe-4S]-[ferredoxin] + sulfite + glycine + 6 H(+). The enzyme catalyses 2 oxidized [4Fe-4S]-[ferredoxin] + taurine + H2O = aminoacetaldehyde + 2 reduced [4Fe-4S]-[ferredoxin] + sulfite + 3 H(+). It carries out the reaction aminoacetaldehyde + 2 oxidized [4Fe-4S]-[ferredoxin] + H2O = 2 reduced [4Fe-4S]-[ferredoxin] + glycine + 3 H(+). Its function is as follows. WOR-like catalytic subunit of an oxidoreductase that can desulfonate and oxidize aliphatic sulfonates such as taurine. The activity involves two steps: an oxidative desulfonation reaction, followed by the activation of a second water molecule and oxidation of the resulting aldehyde. May be involved in the oxidation of various aliphatic sulfonates and also phosphonates. In vitro, has a broad substrate specificity with a high affinity for several substituted and nonsubstituted aliphatic and aromatic aldehydes with various chain lengths, with methyl viologen or benzyl viologen as electron acceptor. Ferredoxin is the physiological electron acceptor. In Pyrococcus furiosus (strain ATCC 43587 / DSM 3638 / JCM 8422 / Vc1), this protein is Aliphatic sulfonate oxidoreductase, WOR-like subunit.